A 378-amino-acid polypeptide reads, in one-letter code: Quinolinate synthase (378 aa).

Iminosuccinate is bound by residues His-59 and Ser-80. Cys-125 contributes to the [4Fe-4S] cluster binding site. Iminosuccinate-binding positions include 151–153 (YAN) and Ser-168. A [4Fe-4S] cluster-binding site is contributed by Cys-212. Iminosuccinate is bound by residues 238-240 (HPE) and Thr-255. Cys-309 is a [4Fe-4S] cluster binding site.

The protein belongs to the quinolinate synthase family. Type 1 subfamily. [4Fe-4S] cluster is required as a cofactor.

Its subcellular location is the cytoplasm. The enzyme catalyses iminosuccinate + dihydroxyacetone phosphate = quinolinate + phosphate + 2 H2O + H(+). It functions in the pathway cofactor biosynthesis; NAD(+) biosynthesis; quinolinate from iminoaspartate: step 1/1. Its function is as follows. Catalyzes the condensation of iminoaspartate with dihydroxyacetone phosphate to form quinolinate. In Burkholderia pseudomallei (strain 1106a), this protein is Quinolinate synthase.